Reading from the N-terminus, the 495-residue chain is MAQGNNYGQTSNGVADESPNMLVYRKMEDVIARMQDEKNGIPIRTVKSFLSKIPSVFSGSDIVQWLIKNLTIEDPVEALHLGTLMAAHGYFFPISDHVLTLKDDGTFYRFQTPYFWPSNCWEPENTDYAVYLCKRTMQNKARLELADYEAESLARLQRAFARKWEFIFMQAEAQAKVDKKRDKIERKILDSQERAFWDVHRPVPGCVNTTEVDIKKSSRMRNPHKTRKSVYGLQNDIRSHSPTHTPTPETKPPTEDELQQQIKYWQIQLDRHRLKMSKVADSLLSYTEQYLEYDPFLLPPDPSNPWLSDDTTFWELEASKEPSQQRVKRWGFGMDEALKDPVGREQFLKFLESEFSSENLRFWLAVEDLKKRPIKEVPSRVQEIWQEFLAPGAPSAINLDSKSYDKTTQNVKEPGRYTFEDAQEHIYKLMKSDSYPRFIRSSAYQELLQAKKKSGNSMDRRTSFEKFAQNVGRNIPIFPCHKNCTPTLRASTNLL.

The DEP domain occupies 37–112; the sequence is EKNGIPIRTV…DDGTFYRFQT (76 aa). Phosphoserine occurs at positions 229 and 241. The disordered stretch occupies residues 235 to 256; that stretch reads NDIRSHSPTHTPTPETKPPTED. Threonine 243 carries the phosphothreonine modification. The region spanning 255-316 is the G protein gamma domain; that stretch reads EDELQQQIKY…LSDDTTFWEL (62 aa). The RGS domain maps to 333-448; the sequence is GMDEALKDPV…IRSSAYQELL (116 aa). The residue at position 434 (serine 434) is a Phosphoserine.

Interacts with GNB5, forming the RGS7-GNB5 complex. Interacts with GPR158; promotes the GTPase activator activity of the RGS7-GNB5 complex in absence of glycine, in contrast GTPase activator activity of the RGS7-GNB5 complex is inhibited in presence of glycine. Interacts with GPR179. Interacts with PKD1; this prevents rapid proteasomal degradation. Interacts with RGS7BP, leading to regulate the subcellular location of the heterodimer formed with GNB5. Interacts (phosphorylated form) with 14-3-3 protein YWHAQ. Interacts with SNAPIN. Interacts with GNAI1. Interacts with GNAO1, GNAI3 and GNAZ. In terms of processing, palmitoylated. Post-translationally, ubiquitinated, leading to rapid proteasomal degradation. Phosphorylation and subsequent interaction with 14-3-3 proteins inhibits GAP activity.

It is found in the cytoplasm. It localises to the cytosol. The protein localises to the cell membrane. The protein resides in the membrane. Its function is as follows. GTPase activator component of the RGS7-GNB5 complex that regulates G protein-coupled receptor signaling cascades. The RGS7-GNB5 complex acts as an inhibitor signal transduction by promoting the GTPase activity of G protein alpha subunits, such as GNAO1, thereby driving them into their inactive GDP-bound form. May play a role in synaptic vesicle exocytosis. Glycine-dependent regulation of the RGS7-GNB5 complex by GPR158 affects mood and cognition via its ability to regulate neuronal excitability in L2/L3 pyramidal neurons of the prefrontal cortex. Modulates the activity of potassium channels that are activated by GNAO1 in response to muscarinic acetylcholine receptor M2/CHRM2 signaling. The sequence is that of Regulator of G-protein signaling 7 (RGS7) from Homo sapiens (Human).